A 594-amino-acid polypeptide reads, in one-letter code: UvrABC system protein C (594 aa).

Positions 14–91 constitute a GIY-YIG domain; it reads DSPGCYLHKD…IQENMPKYNI (78 aa). The UVR domain occupies 196–231; the sequence is DKIIDDLRSKMLEASHNQEFERAAEYRDLISGIATM.

It belongs to the UvrC family. In terms of assembly, interacts with UvrB in an incision complex.

Its subcellular location is the cytoplasm. In terms of biological role, the UvrABC repair system catalyzes the recognition and processing of DNA lesions. UvrC both incises the 5' and 3' sides of the lesion. The N-terminal half is responsible for the 3' incision and the C-terminal half is responsible for the 5' incision. This Streptococcus equi subsp. equi (strain 4047) protein is UvrABC system protein C.